Reading from the N-terminus, the 450-residue chain is Sulfide:quinone oxidoreductase, mitochondrial (450 aa).

FAD-binding positions include 53–54, E75, Q83, and V118; that span reads SG. K173 is subject to N6-acetyllysine. C201 functions as the Cysteine persulfide intermediate in the catalytic mechanism. C201 and C379 are disulfide-bonded. Residue D336 participates in FAD binding. S343 bears the Phosphoserine mark. Position 344–347 (344–347) interacts with FAD; it reads KTAA. C379 (cysteine persulfide intermediate) is an active-site residue.

Belongs to the SQRD family. Requires FAD as cofactor.

Its subcellular location is the mitochondrion. The catalysed reaction is ubiquinone-10 + hydrogen sulfide + sulfite + 2 H(+) = ubiquinol-10 + thiosulfate. The enzyme catalyses a quinone + hydrogen sulfide + glutathione + H(+) = S-sulfanylglutathione + a quinol. It catalyses the reaction ubiquinone-10 + hydrogen sulfide + glutathione + H(+) = S-sulfanylglutathione + ubiquinol-10. Functionally, catalyzes the oxidation of hydrogen sulfide with the help of a quinone, such as ubiquinone-10, giving rise to thiosulfate and ultimately to sulfane (molecular sulfur) atoms. Requires an additional electron acceptor; can use sulfite, sulfide or cyanide (in vitro). It is believed the in vivo electron acceptor is glutathione. In Homo sapiens (Human), this protein is Sulfide:quinone oxidoreductase, mitochondrial.